We begin with the raw amino-acid sequence, 230 residues long: Potassium/proton antiporter CemA (230 aa).

The next 4 membrane-spanning stretches (helical) occupy residues 7 to 27 (LPSF…SFSF), 106 to 126 (IILH…SFFL), 145 to 165 (LNDS…VGFH), and 181 to 201 (LGWV…PVIL).

This sequence belongs to the CemA family.

The protein resides in the plastid. It is found in the chloroplast inner membrane. The catalysed reaction is K(+)(in) + H(+)(out) = K(+)(out) + H(+)(in). In terms of biological role, contributes to K(+)/H(+) antiport activity by supporting proton efflux to control proton extrusion and homeostasis in chloroplasts in a light-dependent manner to modulate photosynthesis. Prevents excessive induction of non-photochemical quenching (NPQ) under continuous-light conditions. Indirectly promotes efficient inorganic carbon uptake into chloroplasts. This Oryza nivara (Indian wild rice) protein is Potassium/proton antiporter CemA.